Here is a 196-residue protein sequence, read N- to C-terminus: Recombination protein RecR (196 aa).

The segment at 56-71 adopts a C4-type zinc-finger fold; sequence CPVCGGLDSQQPCMIC. The 95-residue stretch at 78 to 172 folds into the Toprim domain; that stretch reads PLICVVETVA…SVTRLAQGVP (95 aa).

The protein belongs to the RecR family.

Functionally, may play a role in DNA repair. It seems to be involved in an RecBC-independent recombinational process of DNA repair. It may act with RecF and RecO. In Acidiphilium cryptum (strain JF-5), this protein is Recombination protein RecR.